The sequence spans 466 residues: Probable Xaa-Pro aminopeptidase pepP (466 aa).

Mn(2+)-binding residues include D264, D275, E398, and E438.

The protein belongs to the peptidase M24B family. Requires Mn(2+) as cofactor.

The enzyme catalyses Release of any N-terminal amino acid, including proline, that is linked to proline, even from a dipeptide or tripeptide.. Functionally, catalyzes the removal of a penultimate prolyl residue from the N-termini of peptides. This chain is Probable Xaa-Pro aminopeptidase pepP (pepP), found in Aspergillus clavatus (strain ATCC 1007 / CBS 513.65 / DSM 816 / NCTC 3887 / NRRL 1 / QM 1276 / 107).